The chain runs to 339 residues: MTELFFEYIFPLIIIALKVVAITIPLILCVAYLTYAERRVIGLMQLRRGPNVVGPFGLLQPIADAVKLLFKEPIIPTNSDKILFILAPMITFILSLIGWAVIPFAKGVVLADINVGVLYILAISSLSVYGIIIAGWASNSKYAFLGAIRSSAQMISYEVSMGLVIITVLLTTGTLNLSGIIEAQRTMPWWIDLMLLPMGVVFFISVLAETNRLPFDLPEAESELVAGYNVEYSSMGFALFFLGEYANMILVSAMTTTFFLGGYLPPFNISWLDFIPGFFWFVFKVGFLLFCFLWIRATLPRYRYDQLMRLGWKVFLPLTLFWVVLVSSVLVYTDNLSNV.

Helical transmembrane passes span 9-29, 50-70, 82-102, 115-135, 161-181, 187-207, 235-255, 275-295, and 311-331; these read IFPL…LILC, PNVV…KLLF, ILFI…WAVI, VGVL…IIAG, MGLV…SGII, MPWW…ISVL, MGFA…SAMT, IPGF…FLWI, and GWKV…SVLV.

This sequence belongs to the complex I subunit 1 family. As to quaternary structure, NDH-1 is composed of 14 different subunits. Subunits NuoA, H, J, K, L, M, N constitute the membrane sector of the complex.

The protein localises to the cell inner membrane. The enzyme catalyses a quinone + NADH + 5 H(+)(in) = a quinol + NAD(+) + 4 H(+)(out). Its function is as follows. NDH-1 shuttles electrons from NADH, via FMN and iron-sulfur (Fe-S) centers, to quinones in the respiratory chain. The immediate electron acceptor for the enzyme in this species is believed to be ubiquinone. Couples the redox reaction to proton translocation (for every two electrons transferred, four hydrogen ions are translocated across the cytoplasmic membrane), and thus conserves the redox energy in a proton gradient. This subunit may bind ubiquinone. The protein is NADH-quinone oxidoreductase subunit H of Rickettsia felis (strain ATCC VR-1525 / URRWXCal2) (Rickettsia azadi).